The following is a 90-amino-acid chain: Protein A54 (90 aa).

This Homo sapiens (Human) protein is Protein A54.